The sequence spans 217 residues: uncharacterized protein (217 aa).

Transmembrane regions (helical) follow at residues 151–171 and 177–197; these read LIPFINFFLLYHQIILSHSLF and ISFHFLFFSFLSFPLLSFILF.

It is found in the mitochondrion membrane. This is an uncharacterized protein from Schizosaccharomyces pombe (strain 972 / ATCC 24843) (Fission yeast).